Reading from the N-terminus, the 687-residue chain is Cytochrome b/c1 (687 aa).

Residues 46 to 66 traverse the membrane as a helical segment; it reads FGAILSFMLGMQILTGVILAM. Heme b is bound by residues His-96 and His-110. 2 consecutive transmembrane segments (helical) span residues 126-146 and 160-180; these read VLWI…FMGY and VITN…TLLW. The heme b site is built by His-197 and His-211. The next 6 helical transmembrane spans lie at 199–219, 247–267, 305–325, 337–357, 363–383, and 410–430; these read LLPF…HVAG, FGVA…PNYL, LAGV…PWLD, LAKQ…YLGA, IYVI…LIVL, and AVAS…GSLQ. The interval 404–434 is internal signal sequence; it reads LAKGGKAVASVAIALVAAGALFLGSLQDARA. The Cytochrome c domain occupies 458–643; sequence GALQRGLKVY…TVAQYSKDVT (186 aa). Heme c-binding residues include Cys-471, Cys-474, His-475, and Met-616. The chain crosses the membrane as a helical span at residues 666 to 678; it reads VFLIIFAGLMYFT.

It belongs to the cytochrome b family. As to quaternary structure, the main subunits of complex b-c1 are: cytochrome b, cytochrome c1 and the Rieske protein. It depends on heme b as a cofactor. Requires heme c as cofactor. In terms of processing, the protein is post-translationally processed into cytochrome b and c1. This occurs by processing between residues 434 and 435 without processing between cytochrome b and the N-terminal of the putative signal sequence domain.

It is found in the cell inner membrane. Its function is as follows. Component of the ubiquinol-cytochrome c reductase complex (complex III or cytochrome b-c1 complex), which is a respiratory chain that generates an electrochemical potential coupled to ATP synthesis. c1 functions as an electron donor to cytochrome c. In Bradyrhizobium diazoefficiens (strain JCM 10833 / BCRC 13528 / IAM 13628 / NBRC 14792 / USDA 110), this protein is Cytochrome b/c1 (fbcH).